Here is a 378-residue protein sequence, read N- to C-terminus: Glutamate 5-kinase (378 aa).

Residue lysine 19 participates in ATP binding. Positions 60, 147, and 159 each coordinate substrate. ATP contacts are provided by residues 179–180 (SD) and 221–227 (SGGMRTK). Residues 285 to 362 (KGTLTIDAGA…GEMEQLLGYR (78 aa)) form the PUA domain.

It belongs to the glutamate 5-kinase family.

The protein localises to the cytoplasm. It carries out the reaction L-glutamate + ATP = L-glutamyl 5-phosphate + ADP. It functions in the pathway amino-acid biosynthesis; L-proline biosynthesis; L-glutamate 5-semialdehyde from L-glutamate: step 1/2. Functionally, catalyzes the transfer of a phosphate group to glutamate to form L-glutamate 5-phosphate. This is Glutamate 5-kinase from Gluconobacter oxydans (strain 621H) (Gluconobacter suboxydans).